Here is a 196-residue protein sequence, read N- to C-terminus: Large ribosomal subunit protein bL25 (196 aa).

This sequence belongs to the bacterial ribosomal protein bL25 family. CTC subfamily. Part of the 50S ribosomal subunit; part of the 5S rRNA/L5/L18/L25 subcomplex. Contacts the 5S rRNA. Binds to the 5S rRNA independently of L5 and L18.

Its function is as follows. This is one of the proteins that binds to the 5S RNA in the ribosome where it forms part of the central protuberance. This chain is Large ribosomal subunit protein bL25, found in Amoebophilus asiaticus (strain 5a2).